A 303-amino-acid chain; its full sequence is MNKVLVIAGPTAVGKTEISIEIARRINGEIICMDSRQIYSHLIIGTATPDEETKKLVPHHLYGSVDPRTHFTAFDYKKLAEKKIGEVLNRGNTPVLVGGTGLYLDALRKGFLNVKSDYGLRTYLRKLETNNPGVLRKILVDLDPQRAQKIHPNDLKRIIRAIEIYVITGIKMGEIVKENRQDENSFDYHIIVLDRERQELHERINKRVHQMIDEGLIEEVRNLLSLGYSTTLNALNTIGYKEVVQYLYGKIDFNEMVHQIKVNTRNYARRQIIYFRKIEGAKWINLSKTSQEEVVDQILSEFI.

9–16 (GPTAVGKT) provides a ligand contact to ATP. Residue 11 to 16 (TAVGKT) participates in substrate binding. Positions 34 to 37 (DSRQ) are interaction with substrate tRNA.

Belongs to the IPP transferase family. As to quaternary structure, monomer. Mg(2+) serves as cofactor.

The catalysed reaction is adenosine(37) in tRNA + dimethylallyl diphosphate = N(6)-dimethylallyladenosine(37) in tRNA + diphosphate. Catalyzes the transfer of a dimethylallyl group onto the adenine at position 37 in tRNAs that read codons beginning with uridine, leading to the formation of N6-(dimethylallyl)adenosine (i(6)A). The sequence is that of tRNA dimethylallyltransferase from Petrotoga mobilis (strain DSM 10674 / SJ95).